The sequence spans 311 residues: Ribonuclease HIII (311 aa).

The 217-residue stretch at 95–311 (MSIVGSDEVG…NTEKAFRLLK (217 aa)) folds into the RNase H type-2 domain. A divalent metal cation contacts are provided by aspartate 101, glutamate 102, and aspartate 206.

Belongs to the RNase HII family. RnhC subfamily. Mn(2+) serves as cofactor. Mg(2+) is required as a cofactor.

Its subcellular location is the cytoplasm. It carries out the reaction Endonucleolytic cleavage to 5'-phosphomonoester.. In terms of biological role, endonuclease that specifically degrades the RNA of RNA-DNA hybrids. This chain is Ribonuclease HIII, found in Bacillus cereus (strain 03BB102).